Consider the following 424-residue polypeptide: Inhibin beta A chain (424 aa).

The N-terminal stretch at 1–20 is a signal peptide; the sequence is MPLLWLRGFLLASCWIIVRS. A propeptide spanning residues 21 to 308 is cleaved from the precursor; it reads SPTPGSGGHS…EEHPHRRRRR (288 aa). The N-linked (GlcNAc...) asparagine glycan is linked to asparagine 165. 2 disordered regions span residues 178–197 and 259–306; these read QQRR…DVGF and KKKK…HRRR. The span at 188-197 shows a compositional bias: acidic residues; that stretch reads AGEEAEDVGF. Residues 263-275 are compositionally biased toward basic and acidic residues; sequence KEEEAEGRKRDGE. Cystine bridges form between cysteine 312–cysteine 320, cysteine 319–cysteine 389, cysteine 348–cysteine 421, and cysteine 352–cysteine 423.

It belongs to the TGF-beta family. As to quaternary structure, dimeric, linked by one or more disulfide bonds. Inhibin A is a dimer of alpha/INHA and beta-A/INHBA. Activin A is a homodimer of beta-A/INHBA. Activin AB is a dimer of beta-A/INHBA and beta-B/INHBB. Interacts with FST and FSTL3; these interactions prevent activin A interaction to its type II receptor. Activin A interacts with ACVR2A. Activin A interacts with BMPR2. Inhibin A interacts with ACVR1; this interaction creates a non-signaling complex (NSC) that inhibits ACVR1-mediated BMP signaling. Inhibin A interacts with ACVR2A.

It localises to the secreted. Inhibins/activins are involved in regulating a number of diverse functions such as hypothalamic and pituitary hormone secretion, gonadal hormone secretion, germ cell development and maturation, erythroid differentiation, insulin secretion, nerve cell survival, embryonic axial development or bone growth, depending on their subunit composition. Its function is as follows. Activin A is a homodimer of INHBA that plays a role in several essential biological processes including embryonic development, stem cell maintenance and differentiation, haematopoiesis, cell proliferation and tissue fibrosis. Signals through type I (such as ACVR1B or ACVR1C) and type II receptors (such as ACVR2A, ACVR2B or BMPR2) which, upon ligand binding, phosphorylate SMAD2 and SMAD3 intracellular signaling mediators that form a complex with SMAD4, translocate to the nucleus and modulate gene expression. Can also activate alternative non-canonical intracellular signaling pathways including the p38 MAPK, extracellular signal-regulated kinases 1/2 (ERK1/2) and c-Jun N-terminal kinases (JNKs) to modulate cell migration and differentiation. Alternatively, promotes osteoblastic differentiation via ACVRL1-SMAD1/5/9 pathway. In addition, can engage the type I receptor ACVR1 to form an ACVR1-activin A-type II receptor non-signaling complex (NSC) that renders receptors unavailable for engagement with BMPs, hence resulting in an apparent inhibition of ACVR1-mediated BMP signaling. In terms of biological role, inhibin A is a dimer of alpha/INHA and beta-A/INHBA that functions as a feedback regulator in the hypothalamic-pituitary-gonadal (HPG) axis. Inhibits the secretion of FSH from the anterior pituitary gland by acting on pituitary gonadotrope cells. Antagonizes activin A by binding to the proteoglycan, betaglycan, and forming a stable complex with and, thereby, sequestering type II activin receptors while excluding type I receptor. This Sus scrofa (Pig) protein is Inhibin beta A chain (INHBA).